Consider the following 308-residue polypeptide: Probable manganese-dependent inorganic pyrophosphatase (308 aa).

H9, D13, D15, D75, H97, and D149 together coordinate Mn(2+).

This sequence belongs to the PPase class C family. Mn(2+) is required as a cofactor.

It localises to the cytoplasm. It carries out the reaction diphosphate + H2O = 2 phosphate + H(+). The chain is Probable manganese-dependent inorganic pyrophosphatase from Enterococcus faecalis (strain ATCC 700802 / V583).